A 302-amino-acid polypeptide reads, in one-letter code: Surfeit locus protein 4 homolog (302 aa).

The next 6 membrane-spanning stretches (helical) occupy residues 95–115, 120–140, 193–213, 215–235, 236–256, and 271–291; these read APLL…LVVF, AYAI…YGLI, VLLI…ISWT, ILVH…FKAK, FFAA…NSFW, and DFFQ…TGPG. The Di-lysine motif signature appears at 299–302; the sequence is KKIY.

This sequence belongs to the SURF4 family.

The protein resides in the endoplasmic reticulum membrane. The chain is Surfeit locus protein 4 homolog from Schizosaccharomyces pombe (strain 972 / ATCC 24843) (Fission yeast).